A 527-amino-acid polypeptide reads, in one-letter code: V-set and immunoglobulin domain-containing protein 10 (527 aa).

An N-terminal signal peptide occupies residues Met-1 to Cys-13. 4 Ig-like C2-type domains span residues Leu-14–Ser-111, Pro-123–Leu-212, Pro-216–Gln-306, and Pro-310–Asn-399. The Extracellular segment spans residues Tyr-23 to Asn-409. N-linked (GlcNAc...) asparagine glycosylation is found at Asn-32, Asn-41, Asn-52, Asn-64, Asn-74, Asn-90, Asn-129, Asn-139, Asn-191, Asn-206, Asn-226, Asn-260, Asn-276, Asn-325, Asn-346, and Asn-375. Cys-144 and Cys-194 are disulfide-bonded. Cys-238 and Cys-288 are joined by a disulfide. Cys-330 and Cys-387 are disulfide-bonded. A helical transmembrane segment spans residues Ile-410–Gly-430. The Cytoplasmic segment spans residues Thr-431 to Ile-527. The segment at Arg-501–Ile-527 is disordered. Residues Val-514 to Ile-527 are compositionally biased toward acidic residues.

It localises to the membrane. In Xenopus laevis (African clawed frog), this protein is V-set and immunoglobulin domain-containing protein 10 (vsig10).